Reading from the N-terminus, the 342-residue chain is L-threonine 3-dehydrogenase (342 aa).

Cys38 provides a ligand contact to Zn(2+). Catalysis depends on charge relay system residues Thr40 and His43. 6 residues coordinate Zn(2+): His63, Glu64, Cys93, Cys96, Cys99, and Cys107. NAD(+) is bound by residues Ile175, Asp195, Arg200, 262–264 (LGI), and 286–287 (IY).

It belongs to the zinc-containing alcohol dehydrogenase family. Homotetramer. Requires Zn(2+) as cofactor.

The protein resides in the cytoplasm. It catalyses the reaction L-threonine + NAD(+) = (2S)-2-amino-3-oxobutanoate + NADH + H(+). It functions in the pathway amino-acid degradation; L-threonine degradation via oxydo-reductase pathway; glycine from L-threonine: step 1/2. Its function is as follows. Catalyzes the NAD(+)-dependent oxidation of L-threonine to 2-amino-3-ketobutyrate. In Burkholderia lata (strain ATCC 17760 / DSM 23089 / LMG 22485 / NCIMB 9086 / R18194 / 383), this protein is L-threonine 3-dehydrogenase.